A 311-amino-acid chain; its full sequence is Putative protease MJ0651 (311 aa).

The Nucleophile role is filled by Ser-128. The active-site Proton donor/acceptor is Lys-180.

This sequence belongs to the peptidase S49 family.

This is Putative protease MJ0651 from Methanocaldococcus jannaschii (strain ATCC 43067 / DSM 2661 / JAL-1 / JCM 10045 / NBRC 100440) (Methanococcus jannaschii).